The primary structure comprises 227 residues: (S)-2-haloacid dehalogenase (227 aa).

Asp-10 acts as the Nucleophile in catalysis. An (S)-2-haloacid contacts are provided by residues 11 to 12, Arg-41, and 118 to 119; these read LY and SN. Positions 175 to 180 are important for catalytic activity; sequence SSNAWD.

This sequence belongs to the HAD-like hydrolase superfamily. S-2-haloalkanoic acid dehalogenase family.

The enzyme catalyses an (S)-2-haloacid + H2O = a (2R)-2-hydroxycarboxylate + a halide anion + H(+). The catalysed reaction is (S)-2-chloropropanoate + H2O = (R)-lactate + chloride + H(+). In terms of biological role, catalyzes the hydrolytic dehalogenation of small (S)-2-haloalkanoic acids to yield the corresponding (R)-2-hydroxyalkanoic acids. Acts on acids of short chain lengths, C(2) to C(4), with inversion of configuration at C-2. Active with 2-halogenated carboxylic acids and converts only the S-isomer (or L-isomer) of 2-chloropropionic acid with inversion of configuration to produce R-lactate (or D-isomer). In Pseudomonas fluorescens, this protein is (S)-2-haloacid dehalogenase (dhl VII).